Reading from the N-terminus, the 235-residue chain is 7-cyano-7-deazaguanine synthase (235 aa).

7 to 17 is a binding site for ATP; that stretch reads CSGGLDSVSLA. 4 residues coordinate Zn(2+): Cys-185, Cys-193, Cys-196, and Cys-199.

It belongs to the QueC family. Requires Zn(2+) as cofactor.

It carries out the reaction 7-carboxy-7-deazaguanine + NH4(+) + ATP = 7-cyano-7-deazaguanine + ADP + phosphate + H2O + H(+). It participates in purine metabolism; 7-cyano-7-deazaguanine biosynthesis. Catalyzes the ATP-dependent conversion of 7-carboxy-7-deazaguanine (CDG) to 7-cyano-7-deazaguanine (preQ(0)). This chain is 7-cyano-7-deazaguanine synthase, found in Allorhizobium ampelinum (strain ATCC BAA-846 / DSM 112012 / S4) (Agrobacterium vitis (strain S4)).